The sequence spans 369 residues: MTTAVTAAVSFPSTKTTSLSARSSSVISPDKISYKKVPLYYRNVSATGKMGPIRAQIASDVEAPPPAPAKVEKHSKKMEEGITVNKFKPKTPYVGRCLLNTKITGDDAPGETWHMVFSHEGEIPYREGQSVGVIPDGEDKNGKPHKLRLYSIASSALGDFGDAKSVSLCVKRLIYTNDAGETIKGVCSNFLCDLKPGAEVKLTGPVGKEMLMPKDPNATIIMLGTGTGIAPFRSFLWKMFFEKHDDYKFNGLAWLFLGVPTSSSLLYKEEFEKMKEKAPDNFRLDFAVSREQTNEKGEKMYIQTRMAQYAVELWEMLKKDNTYFYMCGLKGMEKGIDDIMVSLAAAEGIDWIEYKRQLKKAEQWNVEVY.

Residues 1 to 55 (MTTAVTAAVSFPSTKTTSLSARSSSVISPDKISYKKVPLYYRNVSATGKMGPIRA) constitute a chloroplast transit peptide. In terms of domain architecture, FAD-binding FR-type spans 90-212 (KTPYVGRCLL…TGPVGKEMLM (123 aa)). FAD is bound by residues 148–151 (RLYS), 169–171 (CVK), tyrosine 175, 186–188 (VCS), and threonine 227. Residues serine 151 and lysine 171 each contribute to the NADP(+) site. Residues threonine 227, 259–260 (VP), 289–290 (SR), 299–301 (KMY), 328–329 (GL), and glutamate 367 each bind NADP(+).

It belongs to the ferredoxin--NADP reductase type 1 family. It depends on FAD as a cofactor.

It localises to the plastid. The protein resides in the chloroplast stroma. It is found in the chloroplast thylakoid membrane. It catalyses the reaction 2 reduced [2Fe-2S]-[ferredoxin] + NADP(+) + H(+) = 2 oxidized [2Fe-2S]-[ferredoxin] + NADPH. It functions in the pathway energy metabolism; photosynthesis. May play a key role in regulating the relative amounts of cyclic and non-cyclic electron flow to meet the demands of the plant for ATP and reducing power. The sequence is that of Ferredoxin--NADP reductase, chloroplastic (PETH) from Spinacia oleracea (Spinach).